The following is a 183-amino-acid chain: Threonylcarbamoyl-AMP synthase (183 aa).

In terms of domain architecture, YrdC-like spans 1–183 (MNFTEIAEKL…LLTDQLIREG (183 aa)).

The protein belongs to the SUA5 family. TsaC subfamily.

It is found in the cytoplasm. It carries out the reaction L-threonine + hydrogencarbonate + ATP = L-threonylcarbamoyladenylate + diphosphate + H2O. Required for the formation of a threonylcarbamoyl group on adenosine at position 37 (t(6)A37) in tRNAs that read codons beginning with adenine. Catalyzes the conversion of L-threonine, HCO(3)(-)/CO(2) and ATP to give threonylcarbamoyl-AMP (TC-AMP) as the acyladenylate intermediate, with the release of diphosphate. This chain is Threonylcarbamoyl-AMP synthase, found in Actinobacillus succinogenes (strain ATCC 55618 / DSM 22257 / CCUG 43843 / 130Z).